Consider the following 385-residue polypeptide: MSIIRSERYSAIFLLCSAALAIIFANVLDPDTWHAVHSAVSEYHIFGLITPHDIVADFLLAVFFFAVAIELKHELVKGELSSFSKAIIPGVCAAGGILVPISIYLSVASVLPNGWPVPTATDVAFSLGILAIFGSSLPSKVRIFLLALAVLDDLAGIVIIATAFSVSISYWWIIVACITVGLFGFCSYRLARCKTSKTFLIIPAMLLCALAAWVSVYQSGIHATIAGVMLGIMLNRKQGAAIEHALEPYINGIILPAFAFLAAMVRVPHLPLDEISPALWGILLGLLFGKLLGISVFGIIALKFFRKKSISFFNLLVVSALGGIGFTVSLLMNELAFLGTPVHEQGVIAVLIGSLLSAILAIILMRCYKGRKSKSLPGRKGRVSH.

11 helical membrane passes run 9–29 (YSAI…NVLD), 45–65 (IFGL…VFFF), 87–107 (IIPG…YLSV), 114–134 (GWPV…AIFG), 155–175 (AGIV…WIIV), 198–218 (TFLI…SVYQ), 220–235 (GIHA…IMLN), 245–265 (ALEP…AAMV), 282–302 (ILLG…IIAL), 312–332 (FFNL…SLLM), and 345–365 (QGVI…IILM).

The protein belongs to the NhaA Na(+)/H(+) (TC 2.A.33) antiporter family.

Its subcellular location is the cell membrane. It catalyses the reaction Na(+)(in) + 2 H(+)(out) = Na(+)(out) + 2 H(+)(in). Functionally, na(+)/H(+) antiporter that extrudes sodium in exchange for external protons. The polypeptide is Na(+)/H(+) antiporter NhaA (Tropheryma whipplei (strain TW08/27) (Whipple's bacillus)).